Consider the following 453-residue polypeptide: Putative ABC transporter ATP-binding protein MM_0462 (453 aa).

Positions 4–239 (LETRSLKYSY…QELLKKVGLR (236 aa)) constitute an ABC transporter domain. 37–44 (GQNGSGKS) serves as a coordination point for ATP.

The protein belongs to the ABC transporter superfamily.

It localises to the cell membrane. Functionally, probably part of an ABC transporter complex. Responsible for energy coupling to the transport system. This chain is Putative ABC transporter ATP-binding protein MM_0462, found in Methanosarcina mazei (strain ATCC BAA-159 / DSM 3647 / Goe1 / Go1 / JCM 11833 / OCM 88) (Methanosarcina frisia).